Reading from the N-terminus, the 318-residue chain is Vomeronasal type-1 receptor 45 (318 aa).

The Extracellular portion of the chain corresponds to 1–32 (MSEILFFSPQPLFSHMMNKNSRLHTHSNIKNT). Residues 33–53 (FFSEIGIGILGNSFLLLFHIL) form a helical membrane-spanning segment. The Cytoplasmic segment spans residues 54-65 (KFIRGHRLRLTD). A helical transmembrane segment spans residues 66-86 (LPIGLLSLIHLLMLLLMAFIA). Over 87-109 (TDIFISRRGWDDIICKFLVYLYR) the chain is Extracellular. Cysteines 101 and 188 form a disulfide. Residues 110–130 (VLRGLSLCTTSMLSVLQAIIL) traverse the membrane as a helical segment. Over 131 to 150 (SPRSSCLAKLKHKYPHHISC) the chain is Cytoplasmic. Residues 151–171 (AIIFLSVLYMLISSHILLSII) traverse the membrane as a helical segment. Over 172 to 206 (ATPNLTRNDFLYVTQSCSILPLSYVMQSMYSTLLA) the chain is Extracellular. Asparagine 175 is a glycosylation site (N-linked (GlcNAc...) asparagine). Residues 207-227 (LREVFLISLMVLSTLYMVVLL) form a helical membrane-spanning segment. Over 228–254 (CRHRKQAQHLQGTSLSPKASAEQRATQ) the chain is Cytoplasmic. A helical membrane pass occupies residues 255-275 (TILMLMTFFVLMSIFDSIVSC). At 276–285 (SRTMFLDDPT) the chain is on the extracellular side. The helical transmembrane segment at 286-306 (SYSIHIFVMHIYATVSPFVFM) threads the bilayer. The Cytoplasmic portion of the chain corresponds to 307 to 318 (STEKHIVNILRG).

It belongs to the G-protein coupled receptor 1 family. Expressed in a subset of sensory neurons located in the apical layer of the vomeronasal organ.

It is found in the cell membrane. Functionally, putative pheromone receptor implicated in the regulation of social and reproductive behavior. This Mus musculus (Mouse) protein is Vomeronasal type-1 receptor 45 (Vmn1r45).